A 688-amino-acid polypeptide reads, in one-letter code: Lectin-domain containing receptor kinase VI.3 (688 aa).

The signal sequence occupies residues 1-14; sequence MLVLFLLLTIPTRA. Topologically, residues 15-306 are extracellular; that stretch reads QRTTTETPKT…KRGYNSQVLA (292 aa). Residues 22 to 271 are legume-lectin like; the sequence is PKTEFIFRGF…AHYVMGWSFS (250 aa). The chain crosses the membrane as a helical span at residues 307 to 327; the sequence is LIVALSGVTVILLALLFFFVM. At 328-688 the chain is on the cytoplasmic side; it reads YKKRLQQGEV…VSSSSVISGR (361 aa). The region spanning 361-640 is the Protein kinase domain; it reads FKENRIVGTG…LNGDDDVPEI (280 aa). Residues 367-375 and Lys-391 contribute to the ATP site; that span reads VGTGGFGTV. Asp-490 (proton acceptor) is an active-site residue. The interval 662-688 is disordered; that stretch reads VSSDRASSSVPSFSVTRVSSSSVISGR.

In the C-terminal section; belongs to the protein kinase superfamily. Ser/Thr protein kinase family. The protein in the N-terminal section; belongs to the leguminous lectin family.

The protein localises to the cell membrane. It carries out the reaction L-seryl-[protein] + ATP = O-phospho-L-seryl-[protein] + ADP + H(+). The enzyme catalyses L-threonyl-[protein] + ATP = O-phospho-L-threonyl-[protein] + ADP + H(+). Its function is as follows. Involved in negative regulation of abscisic acid response in seed germination. The sequence is that of Lectin-domain containing receptor kinase VI.3 (LECRK63) from Arabidopsis thaliana (Mouse-ear cress).